We begin with the raw amino-acid sequence, 602 residues long: MKSKVPMKNIRNFSIIAHIDHGKSTLADCLIAECNAISNREMTSQVMDTMDIEKERGITIKAQSVRLNYTLKGEDYVLNLIDTPGHVDFSYEVSRSLCSCEGALLVVDATQGVEAQTIANVYIALDNNLEILPVINKIDLPNANVLEVKQDIEDTIGIDCSNANEVSAKARLGIKDLLEKIITTIPAPSGDFNAPLKALIYDSWFDNYLGALALVRIMDGSINTEQEILVMGTGKKHGVLGLYYPNPLKKIPTKSLECGEIGIVSLGLKSVTDIAVGDTLTDAKNPTPKPIEGFMPAKPFVFAGLYPIETDRFEDLREALLKLQLNDCALNFEPESSVALGFGFRVGFLGLLHMEVIKERLEREFGLNLIATAPTVVYEVHLTDNSIKYVQNPSELPPENHIACIKEPFVRATIITPSEFLGNLMQLLNNKRGIQEKMEYLNQSRVMLTYSLPSNEIVMDFYDKLKSCTKGYASFDYEPIENREAHLVKLDVRVAGDVVDALSIIIDKNKAYEKGRALVETMKELIPRQLFEVAIQASVGNKIIARETIKSVGKNVTAKCYGGDITRKRKLLEKQKEGKKRMKAIGKVELPQEAFLAILKID.

Residues 8–189 (KNIRNFSIIA…KIITTIPAPS (182 aa)) form the tr-type G domain. Residues 20 to 25 (DHGKST) and 136 to 139 (NKID) each bind GTP.

Belongs to the TRAFAC class translation factor GTPase superfamily. Classic translation factor GTPase family. LepA subfamily.

It localises to the cell inner membrane. It carries out the reaction GTP + H2O = GDP + phosphate + H(+). Its function is as follows. Required for accurate and efficient protein synthesis under certain stress conditions. May act as a fidelity factor of the translation reaction, by catalyzing a one-codon backward translocation of tRNAs on improperly translocated ribosomes. Back-translocation proceeds from a post-translocation (POST) complex to a pre-translocation (PRE) complex, thus giving elongation factor G a second chance to translocate the tRNAs correctly. Binds to ribosomes in a GTP-dependent manner. This is Elongation factor 4 from Helicobacter pylori (strain Shi470).